The primary structure comprises 217 residues: Fucoxanthin-chlorophyll a-c binding protein A, chloroplastic (217 aa).

A chloroplast-targeting transit peptide spans 1–39; the sequence is MKSAVMAVACAAAPGLRRPSAFNGAALTTSAKSSSAMKM. 3 consecutive transmembrane segments (helical) span residues 81-101, 122-142, and 183-203; these read IAMLAIAGHLTQQNARLPGML, IPPAGLAQIFAFIGFLELAVM, and GRAAQMGILALMVHEELNNKP.

Belongs to the fucoxanthin chlorophyll protein family. As to quaternary structure, the LHC complex of chromophytic algae is composed of fucoxanthin, chlorophyll A and C bound non-covalently by fucoxanthin chlorophyll proteins (FCPs). The ratio of pigments in this LHC is; fucoxanthin: chlorophyll C: chlorophyll A; (0.6-1): (0.1-0.3): (1).

The protein localises to the plastid. Its subcellular location is the chloroplast thylakoid membrane. In terms of biological role, the light-harvesting complex (LHC) functions as a light receptor, it captures and delivers excitation energy to photosystems with which it is closely associated. Energy is transferred from the carotenoid and chlorophyll C (or B) to chlorophyll A and the photosynthetic reaction centers where it is used to synthesize ATP and reducing power. This chain is Fucoxanthin-chlorophyll a-c binding protein A, chloroplastic (FCPA), found in Macrocystis pyrifera (Giant kelp).